We begin with the raw amino-acid sequence, 412 residues long: Lysosomal phospholipase A and acyltransferase (412 aa).

The signal sequence occupies residues 1–33 (MDRHLCTCRETQLRSGLLLPLFLLMMLADLTLP). Asp46 is a substrate binding site. Cysteines 65 and 89 form a disulfide. Residue Asn99 is glycosylated (N-linked (GlcNAc...) asparagine). The active-site Acyl-ester intermediate is Ser198. Ser198 contributes to the Zn(2+) binding site. Met199 is a substrate binding site. N-linked (GlcNAc...) asparagine glycans are attached at residues Asn273 and Asn289. Position 355 (Cys355) interacts with Zn(2+). Active-site charge relay system residues include Asp360 and His392. His392 serves as a coordination point for Zn(2+). N-linked (GlcNAc...) asparagine glycosylation occurs at Asn398.

Belongs to the AB hydrolase superfamily. Lipase family. N-glycosylated. N-glycosylation is important for maturation of the enzyme and normal subcellular location. In terms of tissue distribution, detected in blood plasma. Detected in alveolar macrophages (at protein level). Detected in heart, liver, spleen, kidney, thymus, brain and lung.

Its subcellular location is the secreted. The protein localises to the lysosome. It is found in the membrane. It carries out the reaction a 1,2-diacyl-sn-glycero-3-phosphocholine + H2O = a 2-acyl-sn-glycero-3-phosphocholine + a fatty acid + H(+). It catalyses the reaction 1-hexadecanoyl-2-(9Z-octadecenoyl)-sn-glycero-3-phosphocholine + H2O = 2-(9Z-octadecenoyl)-sn-glycero-3-phosphocholine + hexadecanoate + H(+). The catalysed reaction is 1,2-di-(9Z-octadecenoyl)-sn-glycero-3-phosphocholine + H2O = 2-(9Z-octadecenoyl)-sn-glycero-3-phosphocholine + (9Z)-octadecenoate + H(+). The enzyme catalyses 1-hexadecanoyl-2-glutaroyl-sn-glycero-3-phosphocholine + H2O = 2-glutaroyl-sn-glycero-3-phosphocholine + hexadecanoate + H(+). It carries out the reaction 1-hexadecanoyl-2-nonadioyl-sn-glycero-3-phosphocholine + H2O = 2-nonadioyl-sn-glycero-3-phosphocholine + hexadecanoate + H(+). It catalyses the reaction 1-hexadecanoyl-2-(5-oxopentanoyl)-sn-glycero-3-phosphocholine + H2O = 2-(5-oxopentanoyl)-sn-glycero-3-phosphocholine + hexadecanoate + H(+). The catalysed reaction is 1-hexadecanoyl-2-(9-oxononanoyl)-sn-glycero-3-phosphocholine + H2O = 2-(9-oxononanoyl)-sn-glycero-3-phosphocholine + hexadecanoate + H(+). The enzyme catalyses 1,2-dihexadecanoyl-sn-glycero-3-phosphocholine + H2O = 2-hexadecanoyl-sn-glycero-3-phosphocholine + hexadecanoate + H(+). It carries out the reaction a 1,2-diacyl-sn-glycero-3-phosphocholine + H2O = a 1-acyl-sn-glycero-3-phosphocholine + a fatty acid + H(+). It catalyses the reaction 1-hexadecanoyl-2-(9Z-octadecenoyl)-sn-glycero-3-phosphocholine + H2O = 1-hexadecanoyl-sn-glycero-3-phosphocholine + (9Z)-octadecenoate + H(+). The catalysed reaction is 1,2-di-(9Z-octadecenoyl)-sn-glycero-3-phosphocholine + H2O = 1-(9Z-octadecenoyl)-sn-glycero-3-phosphocholine + (9Z)-octadecenoate + H(+). The enzyme catalyses 1,2-dihexadecanoyl-sn-glycero-3-phosphocholine + H2O = 1-hexadecanoyl-sn-glycero-3-phosphocholine + hexadecanoate + H(+). It carries out the reaction a 1-acyl-sn-glycero-3-phosphocholine + H2O = sn-glycerol 3-phosphocholine + a fatty acid + H(+). It catalyses the reaction 1-hexadecanoyl-sn-glycero-3-phosphocholine + H2O = sn-glycerol 3-phosphocholine + hexadecanoate + H(+). The catalysed reaction is N-(acetyl)-sphing-4-enine + a 1,2-diacyl-sn-glycero-3-phosphoethanolamine = 1-O-acyl-N-(acetyl)-sphing-4-enine + a 2-acyl-sn-glycero-3-phosphoethanolamine. The enzyme catalyses 1-hexadecanoyl-2-(9Z-octadecenoyl)-sn-glycero-3-phosphoethanolamine + N-(acetyl)-sphing-4-enine = 2-(9Z-octadecenoyl)-sn-glycero-3-phosphoethanolamine + 1-hexadecanoyl-N-(acetyl)-sphing-4-enine. It carries out the reaction 1-hexadecanoyl-2-(9Z,12Z-octadecadienoyl)-sn-glycero-3-phosphoethanolamine + N-(acetyl)-sphing-4-enine = 2-(9Z,12Z)-octadecadienoyl-sn-glycero-3-phosphoethanolamine + 1-hexadecanoyl-N-(acetyl)-sphing-4-enine. It catalyses the reaction 1-hexadecanoyl-2-(5Z,8Z,11Z,14Z-eicosatetraenoyl)-sn-glycero-3-phosphoethanolamine + N-(acetyl)-sphing-4-enine = 2-(5Z,8Z,11Z,14Z)-eicosatetraenoyl-sn-glycero-3-phosphoethanolamine + 1-hexadecanoyl-N-(acetyl)-sphing-4-enine. The catalysed reaction is N-(acetyl)-sphing-4-enine + a 1,2-diacyl-sn-glycero-3-phosphoethanolamine = 1-O-acyl-N-(acetyl)-sphing-4-enine + a 1-acyl-sn-glycero-3-phosphoethanolamine. The enzyme catalyses 1-hexadecanoyl-2-(9Z-octadecenoyl)-sn-glycero-3-phosphoethanolamine + N-(acetyl)-sphing-4-enine = 1-(9Z-octadecenoyl)-N-(acetyl)-sphing-4-enine + 1-hexadecanoyl-sn-glycero-3-phosphoethanolamine. It carries out the reaction 1-hexadecanoyl-2-(9Z,12Z-octadecadienoyl)-sn-glycero-3-phosphoethanolamine + N-(acetyl)-sphing-4-enine = 1-(9Z,12Z-octadecadienoyl)-N-acetylsphing-4-enine + 1-hexadecanoyl-sn-glycero-3-phosphoethanolamine. It catalyses the reaction 1-hexadecanoyl-2-(5Z,8Z,11Z,14Z-eicosatetraenoyl)-sn-glycero-3-phosphoethanolamine + N-(acetyl)-sphing-4-enine = 1-(5Z,8Z,11Z,14Z)-eicosatetraenoyl-N-(acetyl)-sphing-4-enine + 1-hexadecanoyl-sn-glycero-3-phosphoethanolamine. The catalysed reaction is N-(acetyl)-sphing-4-enine + a 1,2-diacyl-sn-glycero-3-phosphocholine = 1-O-acyl-N-(acetyl)-sphing-4-enine + a 2-acyl-sn-glycero-3-phosphocholine. The enzyme catalyses 1-hexadecanoyl-2-(9Z-octadecenoyl)-sn-glycero-3-phosphocholine + N-(acetyl)-sphing-4-enine = 1-hexadecanoyl-N-(acetyl)-sphing-4-enine + 2-(9Z-octadecenoyl)-sn-glycero-3-phosphocholine. It carries out the reaction 1-hexadecanoyl-2-(9Z,12Z-octadecadienoyl)-sn-glycero-3-phosphocholine + N-(acetyl)-sphing-4-enine = 2-(9Z,12Z-octadecadienoyl)-sn-glycero-3-phosphocholine + 1-hexadecanoyl-N-(acetyl)-sphing-4-enine. It catalyses the reaction 1-hexadecanoyl-2-(5Z,8Z,11Z,14Z-eicosatetraenoyl)-sn-glycero-3-phosphocholine + N-(acetyl)-sphing-4-enine = 1-hexadecanoyl-N-(acetyl)-sphing-4-enine + 2-(5Z,8Z,11Z,14Z)-eicosatetraenoyl-sn-glycero-3-phosphocholine. The catalysed reaction is 1-hexadecanoyl-2-(4Z,7Z,10Z,13Z,16Z,19Z-docosahexaenoyl)-sn-glycero-3-phosphocholine + N-(acetyl)-sphing-4-enine = 2-(4Z,7Z,10Z,13Z,16Z,19Z-docosahexaenoyl)-sn-glycero-3-phosphocholine + 1-hexadecanoyl-N-(acetyl)-sphing-4-enine. The enzyme catalyses 1-hexadecanoyl-2-nonadioyl-sn-glycero-3-phosphocholine + N-(acetyl)-sphing-4-enine = 2-nonadioyl-sn-glycero-3-phosphocholine + 1-hexadecanoyl-N-(acetyl)-sphing-4-enine. It carries out the reaction 1-octadecanoyl-2-(9Z-octadecenoyl)-sn-glycero-3-phosphocholine + N-(acetyl)-sphing-4-enine = 1-octadecanoyl-N-(acetyl)-sphing-4-enine + 2-(9Z-octadecenoyl)-sn-glycero-3-phosphocholine. It catalyses the reaction 1-(9Z)-octadecenoyl-2-octadecanoyl-sn-glycero-3-phosphocholine + N-(acetyl)-sphing-4-enine = 2-octadecanoyl-sn-glycero-3-phosphocholine + 1-(9Z-octadecenoyl)-N-(acetyl)-sphing-4-enine. The catalysed reaction is 1-octadecanoyl-2-(5Z,8Z,11Z,14Z-eicosatetraenoyl)-sn-glycero-3-phosphocholine + N-(acetyl)-sphing-4-enine = 1-octadecanoyl-N-(acetyl)-sphing-4-enine + 2-(5Z,8Z,11Z,14Z)-eicosatetraenoyl-sn-glycero-3-phosphocholine. The enzyme catalyses 1-(9Z-octadecenoyl)-2-hexadecanoyl-sn-glycero-3-phosphocholine + N-(acetyl)-sphing-4-enine = 1-(9Z-octadecenoyl)-N-(acetyl)-sphing-4-enine + 2-hexadecanoyl-sn-glycero-3-phosphocholine. It carries out the reaction N-(acetyl)-sphing-4-enine + a 1,2-diacyl-sn-glycero-3-phosphocholine = 1-O-acyl-N-(acetyl)-sphing-4-enine + a 1-acyl-sn-glycero-3-phosphocholine. It catalyses the reaction 1-hexadecanoyl-2-(9Z-octadecenoyl)-sn-glycero-3-phosphocholine + N-(acetyl)-sphing-4-enine = 1-(9Z-octadecenoyl)-N-(acetyl)-sphing-4-enine + 1-hexadecanoyl-sn-glycero-3-phosphocholine. The catalysed reaction is 1-hexadecanoyl-2-(9Z,12Z-octadecadienoyl)-sn-glycero-3-phosphocholine + N-(acetyl)-sphing-4-enine = 1-(9Z,12Z-octadecadienoyl)-N-acetylsphing-4-enine + 1-hexadecanoyl-sn-glycero-3-phosphocholine. The enzyme catalyses 1-hexadecanoyl-2-(5Z,8Z,11Z,14Z-eicosatetraenoyl)-sn-glycero-3-phosphocholine + N-(acetyl)-sphing-4-enine = 1-(5Z,8Z,11Z,14Z)-eicosatetraenoyl-N-(acetyl)-sphing-4-enine + 1-hexadecanoyl-sn-glycero-3-phosphocholine. It carries out the reaction 1-hexadecanoyl-2-(4Z,7Z,10Z,13Z,16Z,19Z-docosahexaenoyl)-sn-glycero-3-phosphocholine + N-(acetyl)-sphing-4-enine = 1-(4Z,7Z,10Z,13Z,16Z,19Z-docosahexaenoyl)-N-(acetyl)-sphing-4-enine + 1-hexadecanoyl-sn-glycero-3-phosphocholine. It catalyses the reaction 1-octadecanoyl-2-(9Z-octadecenoyl)-sn-glycero-3-phosphocholine + N-(acetyl)-sphing-4-enine = 1-(9Z-octadecenoyl)-N-(acetyl)-sphing-4-enine + 1-octadecanoyl-sn-glycero-3-phosphocholine. The catalysed reaction is 1-octadecanoyl-2-(9Z,12Z)-octadecadienoyl-sn-glycero-3-phosphocholine + N-(acetyl)-sphing-4-enine = 1-(9Z,12Z-octadecadienoyl)-N-acetylsphing-4-enine + 1-octadecanoyl-sn-glycero-3-phosphocholine. The enzyme catalyses 1-(9Z-octadecenoyl)-2-hexadecanoyl-sn-glycero-3-phosphocholine + N-(acetyl)-sphing-4-enine = 1-hexadecanoyl-N-(acetyl)-sphing-4-enine + 1-(9Z-octadecenoyl)-sn-glycero-3-phosphocholine. It carries out the reaction 1-(9Z)-octadecenoyl-2-octadecanoyl-sn-glycero-3-phosphocholine + N-(acetyl)-sphing-4-enine = 1-octadecanoyl-N-(acetyl)-sphing-4-enine + 1-(9Z-octadecenoyl)-sn-glycero-3-phosphocholine. It catalyses the reaction 1,2-di-(9Z-octadecenoyl)-sn-glycero-3-phosphocholine + N-(acetyl)-sphing-4-enine = 1-(9Z-octadecenoyl)-N-(acetyl)-sphing-4-enine + 1-(9Z-octadecenoyl)-sn-glycero-3-phosphocholine. The catalysed reaction is 1-octadecanoyl-2-(5Z,8Z,11Z,14Z-eicosatetraenoyl)-sn-glycero-3-phosphocholine + N-(acetyl)-sphing-4-enine = 1-(5Z,8Z,11Z,14Z)-eicosatetraenoyl-N-(acetyl)-sphing-4-enine + 1-octadecanoyl-sn-glycero-3-phosphocholine. The enzyme catalyses a 1,2-diacyl-sn-glycero-3-phospho-L-serine + N-(acetyl)-sphing-4-enine = a 2-acyl-sn-glycero-3-phospho-L-serine + 1-O-acyl-N-(acetyl)-sphing-4-enine. It carries out the reaction 1-octadecanoyl-2-(9Z-octadecenoyl)-sn-glycero-3-phospho-L-serine + N-(acetyl)-sphing-4-enine = 2-(9Z-octadecenoyl)-sn-glycero-3-phospho-L-serine + 1-octadecanoyl-N-(acetyl)-sphing-4-enine. It catalyses the reaction a 1,2-diacyl-sn-glycero-3-phospho-L-serine + N-(acetyl)-sphing-4-enine = 1-O-acyl-N-(acetyl)-sphing-4-enine + a 1-acyl-sn-glycero-3-phospho-L-serine. The catalysed reaction is 1-octadecanoyl-2-(9Z-octadecenoyl)-sn-glycero-3-phospho-L-serine + N-(acetyl)-sphing-4-enine = 1-octadecanoyl-sn-glycero-3-phosphoserine + 1-(9Z-octadecenoyl)-N-(acetyl)-sphing-4-enine. The enzyme catalyses a 1,2-diacyl-sn-glycero-3-phospho-(1'-sn-glycerol) + N-(acetyl)-sphing-4-enine = 2-acyl-sn-glycero-3-phospho-(1'-sn-glycerol) + 1-O-acyl-N-(acetyl)-sphing-4-enine. It carries out the reaction 1-octadecanoyl-2-(9Z-octadecenoyl)-sn-glycero-3-phospho-(1'-sn-glycerol) + N-(acetyl)-sphing-4-enine = 2-(9Z-octadecenoyl)-sn-glycero-3-phospho-(1'-sn-glycerol) + 1-octadecanoyl-N-(acetyl)-sphing-4-enine. It catalyses the reaction a 1,2-diacyl-sn-glycero-3-phospho-(1'-sn-glycerol) + N-(acetyl)-sphing-4-enine = 1-O-acyl-N-(acetyl)-sphing-4-enine + 1-acyl-sn-glycero-3-phospho-(1'-sn-glycerol). The catalysed reaction is 1-octadecanoyl-2-(9Z-octadecenoyl)-sn-glycero-3-phospho-(1'-sn-glycerol) + N-(acetyl)-sphing-4-enine = 1-octadecanoyl-sn-glycero-3-phospho-(1'-sn-glycerol) + 1-(9Z-octadecenoyl)-N-(acetyl)-sphing-4-enine. The enzyme catalyses an N-acylethanolamine + a 1,2-diacyl-sn-glycero-3-phosphocholine = 2-(acylamino)ethyl fatty acid + a 2-acyl-sn-glycero-3-phosphocholine. It carries out the reaction an N-acylethanolamine + a 1,2-diacyl-sn-glycero-3-phosphocholine = 2-(acylamino)ethyl fatty acid + a 1-acyl-sn-glycero-3-phosphocholine. It catalyses the reaction N-(5Z,8Z,11Z,14Z-eicosatetraenoyl)-ethanolamine + 1,2-di-(9Z-octadecenoyl)-sn-glycero-3-phosphocholine = 2-[(5Z,8Z,11Z,14Z)-eicosatetraenoylamino]ethyl (9Z)-octadecenoate + (9Z-octadecenoyl)-sn-glycero-3-phosphocholine. The catalysed reaction is N-(9Z-octadecenoyl) ethanolamine + 1,2-di-(9Z-octadecenoyl)-sn-glycero-3-phosphocholine = 2-[(9Z)-octadecenoylamino]ethyl (9Z)-octadecenoate + (9Z-octadecenoyl)-sn-glycero-3-phosphocholine. The enzyme catalyses a 3-acyl-sn-glycerol + a 1,2-diacyl-sn-glycero-3-phosphocholine = a 1,3-diacylglycerol + a 1-acyl-sn-glycero-3-phosphocholine. It carries out the reaction a 3-acyl-sn-glycerol + a 1,2-diacyl-sn-glycero-3-phosphocholine = a 1,3-diacylglycerol + a 2-acyl-sn-glycero-3-phosphocholine. It catalyses the reaction 3-(9Z-octadecenoyl)-sn-glycerol + 1,2-di-(9Z-octadecenoyl)-sn-glycero-3-phosphocholine = 1,3-di-(9Z-octadecenoyl)-glycerol + (9Z-octadecenoyl)-sn-glycero-3-phosphocholine. The catalysed reaction is 3-hexadecanoyl-sn-glycerol + 1,2-di-(9Z-octadecenoyl)-sn-glycero-3-phosphocholine = 1-(9Z)-octadecenoyl-3-hexadecanoyl-sn-glycerol + (9Z-octadecenoyl)-sn-glycero-3-phosphocholine. The enzyme catalyses a 1-acyl-sn-glycerol + a 1,2-diacyl-sn-glycero-3-phosphocholine = a 1,3-diacylglycerol + a 2-acyl-sn-glycero-3-phosphocholine. It carries out the reaction a 1-acyl-sn-glycerol + a 1,2-diacyl-sn-glycero-3-phosphocholine = a 1,3-diacylglycerol + a 1-acyl-sn-glycero-3-phosphocholine. It catalyses the reaction 1-(9Z-octadecenoyl)-sn-glycerol + 1,2-di-(9Z-octadecenoyl)-sn-glycero-3-phosphocholine = 1,3-di-(9Z-octadecenoyl)-glycerol + (9Z-octadecenoyl)-sn-glycero-3-phosphocholine. The catalysed reaction is 1-hexadecanoyl-sn-glycerol + 1,2-di-(9Z-octadecenoyl)-sn-glycero-3-phosphocholine = 1-hexadecanoyl-3-(9Z)-octadecenoyl-sn-glycerol + (9Z-octadecenoyl)-sn-glycero-3-phosphocholine. The enzyme catalyses a 2-acylglycerol + a 1,2-diacyl-sn-glycero-3-phosphocholine = a 1,2-diacylglycerol + a 2-acyl-sn-glycero-3-phosphocholine. It carries out the reaction a 2-acylglycerol + a 1,2-diacyl-sn-glycero-3-phosphocholine = a 1,2-diacylglycerol + a 1-acyl-sn-glycero-3-phosphocholine. It catalyses the reaction 2-hexadecanoylglycerol + 1,2-di-(9Z-octadecenoyl)-sn-glycero-3-phosphocholine = 1-(9Z)-octadecenoyl-2-hexadecanoylglycerol + (9Z-octadecenoyl)-sn-glycero-3-phosphocholine. The catalysed reaction is 1-O-alkylglycerol + a 1,2-diacyl-sn-glycero-3-phosphocholine = 1-O-alkyl-3-acylglycerol + a 1-acyl-sn-glycero-3-phosphocholine. The enzyme catalyses 1-O-alkylglycerol + a 1,2-diacyl-sn-glycero-3-phosphocholine = 1-O-alkyl-3-acylglycerol + a 2-acyl-sn-glycero-3-phosphocholine. It carries out the reaction 1-O-hexadecylglycerol + 1,2-di-(9Z-octadecenoyl)-sn-glycero-3-phosphocholine = 1-O-hexadecyl-3-(9Z)-octadecenoylglycerol + (9Z-octadecenoyl)-sn-glycero-3-phosphocholine. It catalyses the reaction 1-O-alkyl-2-acyl-sn-glycerol + a 1,2-diacyl-sn-glycero-3-phosphocholine = 1-O-alkyl-2,3-diacyl-sn-glycerol + a 2-acyl-sn-glycero-3-phosphocholine. The catalysed reaction is 1-O-alkyl-2-acyl-sn-glycerol + a 1,2-diacyl-sn-glycero-3-phosphocholine = 1-O-alkyl-2,3-diacyl-sn-glycerol + a 1-acyl-sn-glycero-3-phosphocholine. The enzyme catalyses 1-O-hexadecyl-2-acetyl-sn-glycerol + 1,2-di-(9Z-octadecenoyl)-sn-glycero-3-phosphocholine = 1-O-hexadecyl-2-acetyl-3-(9Z)-octadecenoyl-sn-glycerol + (9Z-octadecenoyl)-sn-glycero-3-phosphocholine. It carries out the reaction 1-O-hexadecyl-2-O-methyl-sn-glycerol + 1,2-di-(9Z-octadecenoyl)-sn-glycero-3-phosphocholine = 1-O-hexadecyl-2-O-methyl-3-(9Z)-octadecenoyl-sn-glycerol + (9Z-octadecenoyl)-sn-glycero-3-phosphocholine. It catalyses the reaction a 1,2-diacyl-sn-glycero-3-phosphoethanolamine + H2O = a 1-acyl-sn-glycero-3-phosphoethanolamine + a fatty acid + H(+). The catalysed reaction is 1-acyl-2-(5Z,8Z,11Z,14Z)-eicosatetraenoyl-sn-glycero-3-phosphoethanolamine + H2O = a 1-acyl-sn-glycero-3-phosphoethanolamine + (5Z,8Z,11Z,14Z)-eicosatetraenoate + H(+). The enzyme catalyses a 1,2-diacyl-sn-glycero-3-phospho-(1'-sn-glycerol) + H2O = 1-acyl-sn-glycero-3-phospho-(1'-sn-glycerol) + a fatty acid + H(+). It carries out the reaction 1-hexadecanoyl-2-(9Z-octadecenoyl)-sn-glycero-3-phospho-(1'-sn-glycerol) + H2O = 1-hexadecanoyl-sn-glycero-3-phospho-(1'-sn-glycerol) + (9Z)-octadecenoate + H(+). It catalyses the reaction a 1,2-diacyl-sn-glycero-3-phospho-(1'-sn-glycerol) + H2O = 2-acyl-sn-glycero-3-phospho-(1'-sn-glycerol) + a fatty acid + H(+). The catalysed reaction is 1-hexadecanoyl-2-(9Z-octadecenoyl)-sn-glycero-3-phospho-(1'-sn-glycerol) + H2O = 2-(9Z-octadecenoyl)-sn-glycero-3-phospho-(1'-sn-glycerol) + hexadecanoate + H(+). Its activity is regulated as follows. Phospholipase sn-2 versus sn-1 positional specificity is affected by the phospholipid composition of membranes. Phospholipase A2 activity toward 1-hexadecanoyl-2-(5Z,8Z,11Z,14Z-eicosatetraenoyl)-sn-glycero-3-phosphocholine (PAPE) is enhanced in the presence of 1,2-dioleoyl-sn-glycero-3-phosphocholine (DOPC), which promotes lipid bilayer formation. O-acyltransferase activity is inhibited by antiarrhythmic drug amiodarone. Functionally, has dual calcium-independent phospholipase and O-acyltransferase activities with a potential role in glycerophospholipid homeostasis and remodeling of acyl groups of lipophilic alcohols present in acidic cellular compartments. Catalyzes hydrolysis of the ester bond of the fatty acyl group attached at sn-1 or sn-2 position of phospholipids (phospholipase A1 or A2 activity) and transfer it to the hydroxyl group at the first carbon of lipophilic alcohols (O-acyltransferase activity). Among preferred fatty acyl donors are phosphatidylcholines, phosphatidylethanolamines, phosphatidylglycerols and phosphatidylserines. Favors sn-2 over sn-1 deacylation of unsaturated fatty acyl groups of phosphatidylcholines, phosphatidylethanolamines, and phosphatidylglycerols. Among preferred fatty acyl acceptors are natural lipophilic alcohols including short-chain ceramide N-acetyl-sphingosine (C2 ceramide), alkylacylglycerols, monoacylglycerols, and acylethanolamides such as anandamide and oleoylethanolamide. Selectively hydrolyzes the sn-1 fatty acyl group of truncated oxidized phospholipids and may play a role in detoxification of reactive oxidized phospholipids during oxidative stress. Required for normal phospholipid degradation in alveolar macrophages with potential implications in the clearance of pulmonary surfactant, which is mainly composed of dipalmitoylphosphatidylcholine (1,2-dihexadecanoyl-sn-glycero-3-phosphocholine). Involved in the first step of bis(monoacylglycero)phosphate (BMP) de novo synthesis from phosphatidylglycerol (1,2-diacyl-sn-glycero-3-phospho-(1'-sn-glycerol), PG). BMP is an important player in cargo sorting and degradation, regulation of cellular cholesterol levels and intercellular communication. At neutral pH, hydrolyzes the sn-1 fatty acyl group of the lysophosphatidylcholines. This chain is Lysosomal phospholipase A and acyltransferase, found in Mus musculus (Mouse).